The chain runs to 61 residues: Cytotoxin 2 (61 aa).

4 disulfides stabilise this stretch: cysteine 3/cysteine 22, cysteine 15/cysteine 39, cysteine 43/cysteine 54, and cysteine 55/cysteine 60.

This sequence belongs to the three-finger toxin family. Short-chain subfamily. Type IB cytotoxin sub-subfamily. Expressed by the venom gland.

It is found in the secreted. Its function is as follows. This protein lyses red blood cells, has cytotoxic activity and induces hypotension, but is not neurotoxic. In addition, it induces direct paralysis of the muscle fiber. The sequence is that of Cytotoxin 2 from Hemachatus haemachatus (Rinkhals).